The chain runs to 395 residues: Zinc-regulated GTPase metalloprotein activator 1A (395 aa).

Residues 1–22 (MLPAVGSADEEEDPAEEDCPEL) are disordered. Residues 8–20 (ADEEEDPAEEDCP) show a composition bias toward acidic residues. The short motif at 17–24 (EDCPELVP) is the psi-PxLVp motif element. 49–56 (GYLGAGKT) lines the GTP pocket. The Zn(2+) site is built by cysteine 107, cysteine 109, and cysteine 110. The CXCC motif signature appears at 107–110 (CLCC). GTP is bound by residues 110–114 (CSVKD) and 203–206 (NKTD). Positions 274 to 377 (IVTITFEVPG…ILKQLFIATV (104 aa)) constitute a CobW C-terminal domain.

It belongs to the SIMIBI class G3E GTPase family. ZNG1 subfamily. As to expression, ubiquitously expressed. Up-regulated in cultured astrocytes treated with dopamine.

Its subcellular location is the nucleus. The catalysed reaction is GTP + H2O = GDP + phosphate + H(+). Functionally, zinc chaperone that directly transfers zinc cofactor to target metalloproteins, thereby activating them. Catalyzes zinc insertion into the active site of methionine aminopeptidase METAP1, which function to cleave the initiator methionine from polypeptides during or after protein translation. Mechanistically, the N-terminal psi-PxLVp motif binds to the C6H2-type zinc finger of inactive form of METAP1. After formation of the docked complex, zinc is transferred from the CXCC motif in the GTPase domain of ZNG1A to the zinc binding site in the peptidase domain of METAP1 in a process requiring GTP hydrolysis. GTP/GDP exchange is required for release of active METAP1. This chain is Zinc-regulated GTPase metalloprotein activator 1A, found in Homo sapiens (Human).